We begin with the raw amino-acid sequence, 84 residues long: DNA-directed RNA polymerase subunit Rpo5 (84 aa).

Belongs to the archaeal Rpo5/eukaryotic RPB5 RNA polymerase subunit family. In terms of assembly, part of the RNA polymerase complex.

It localises to the cytoplasm. The enzyme catalyses RNA(n) + a ribonucleoside 5'-triphosphate = RNA(n+1) + diphosphate. DNA-dependent RNA polymerase (RNAP) catalyzes the transcription of DNA into RNA using the four ribonucleoside triphosphates as substrates. The sequence is that of DNA-directed RNA polymerase subunit Rpo5 from Saccharolobus islandicus (strain Y.N.15.51 / Yellowstone #2) (Sulfolobus islandicus).